Here is a 393-residue protein sequence, read N- to C-terminus: Bifunctional enzyme Fae/Hps (393 aa).

The segment at 1-161 is formaldehyde-activating enzyme; that stretch reads MYLIGEALVG…HEKDRAAHAV (161 aa). The active-site Proton donor is His17. Residues Asp19, Leu48, Lys66, Thr68, and Gln83 each contribute to the substrate site. Residues 162–393 form a 3-hexulose-6-phosphate synthase region; sequence MGFKVQRLWD…IDQFRIMTDF (232 aa).

In the N-terminal section; belongs to the formaldehyde-activating enzyme family. It in the C-terminal section; belongs to the HPS/KGPDC family. HPS subfamily.

It carries out the reaction 5,6,7,8-tetrahydromethanopterin + formaldehyde = 5,10-methylenetetrahydromethanopterin + H2O. The catalysed reaction is D-ribulose 5-phosphate + formaldehyde = D-arabino-hex-3-ulose 6-phosphate. It functions in the pathway carbohydrate biosynthesis; D-ribose 5-phosphate biosynthesis. Its function is as follows. Catalyzes the condensation of formaldehyde with tetrahydromethanopterin (H(4)MPT) to 5,10-methylenetetrahydromethanopterin. Catalyzes the reversible formation of ribulose-5-phosphate and formaldehyde from 3-hexulose-6-phosphate. This chain is Bifunctional enzyme Fae/Hps, found in Methanoculleus marisnigri (strain ATCC 35101 / DSM 1498 / JR1).